Reading from the N-terminus, the 136-residue chain is DNA-directed RNA polymerase subunit omega (136 aa).

A disordered region spans residues 79-107 (EPEAETVPLLSSSPAAAAVAPQSSSDDAA). A compositionally biased stretch (low complexity) spans 89–107 (SSSPAAAAVAPQSSSDDAA).

The protein belongs to the RNA polymerase subunit omega family. As to quaternary structure, the RNAP catalytic core consists of 2 alpha, 1 beta, 1 beta' and 1 omega subunit. When a sigma factor is associated with the core the holoenzyme is formed, which can initiate transcription.

It catalyses the reaction RNA(n) + a ribonucleoside 5'-triphosphate = RNA(n+1) + diphosphate. In terms of biological role, promotes RNA polymerase assembly. Latches the N- and C-terminal regions of the beta' subunit thereby facilitating its interaction with the beta and alpha subunits. This Methylobacterium radiotolerans (strain ATCC 27329 / DSM 1819 / JCM 2831 / NBRC 15690 / NCIMB 10815 / 0-1) protein is DNA-directed RNA polymerase subunit omega.